The chain runs to 384 residues: Dihydrolipoyllysine-residue acetyltransferase component of pyruvate dehydrogenase complex (384 aa).

In terms of domain architecture, Lipoyl-binding spans 2–77 (ANEFKFTDVG…SIGQVMAVIG (76 aa)). N6-lipoyllysine is present on K43. H356 is an active-site residue.

This sequence belongs to the 2-oxoacid dehydrogenase family. Forms a 24-polypeptide structural core with octahedral symmetry. Requires (R)-lipoate as cofactor.

It catalyses the reaction N(6)-[(R)-dihydrolipoyl]-L-lysyl-[protein] + acetyl-CoA = N(6)-[(R)-S(8)-acetyldihydrolipoyl]-L-lysyl-[protein] + CoA. Functionally, the pyruvate dehydrogenase complex catalyzes the overall conversion of pyruvate to acetyl-CoA and CO(2). It contains multiple copies of three enzymatic components: pyruvate dehydrogenase (E1), dihydrolipoamide acetyltransferase (E2) and lipoamide dehydrogenase (E3). This Mycoplasma genitalium (strain ATCC 33530 / DSM 19775 / NCTC 10195 / G37) (Mycoplasmoides genitalium) protein is Dihydrolipoyllysine-residue acetyltransferase component of pyruvate dehydrogenase complex (pdhC).